The chain runs to 274 residues: Eukaryotic translation initiation factor 3 subunit G-2 (274 aa).

One can recognise an RRM domain in the interval 194-272; sequence SAVRISNLSE…LILCVEWSKP (79 aa).

Belongs to the eIF-3 subunit G family. As to quaternary structure, component of the eukaryotic translation initiation factor 3 (eIF-3) complex. The eIF-3 complex interacts with pix.

The protein resides in the cytoplasm. Functionally, RNA-binding component of the eukaryotic translation initiation factor 3 (eIF-3) complex, which is involved in protein synthesis of a specialized repertoire of mRNAs and, together with other initiation factors, stimulates binding of mRNA and methionyl-tRNAi to the 40S ribosome. The eIF-3 complex specifically targets and initiates translation of a subset of mRNAs involved in cell proliferation. This subunit can bind 18S rRNA. This chain is Eukaryotic translation initiation factor 3 subunit G-2, found in Drosophila pseudoobscura pseudoobscura (Fruit fly).